Reading from the N-terminus, the 176-residue chain is MSRVAKYPVKLPSGVEVKLEANKLTVKGGQGTLSMTVHSDVTIGQEEGQLTFNPSESAKSWAMVGTTRALVQNIVTGVSEGFTKSLEINGVGYRAQASGNTLNLTLGFSHPVEYKLPEGVTAETPKNTTIVLKSADKQQLGQVAAEIRAFRPPEPYKGKGIRYGDEEVRRKEAKKK.

Positions 153–170 (PEPYKGKGIRYGDEEVRR) are enriched in basic and acidic residues. The segment at 153–176 (PEPYKGKGIRYGDEEVRRKEAKKK) is disordered.

Belongs to the universal ribosomal protein uL6 family. In terms of assembly, part of the 50S ribosomal subunit.

Functionally, this protein binds to the 23S rRNA, and is important in its secondary structure. It is located near the subunit interface in the base of the L7/L12 stalk, and near the tRNA binding site of the peptidyltransferase center. This chain is Large ribosomal subunit protein uL6, found in Chromohalobacter salexigens (strain ATCC BAA-138 / DSM 3043 / CIP 106854 / NCIMB 13768 / 1H11).